The sequence spans 548 residues: Transcriptional adapter ADA2a (548 aa).

A disordered region spans residues 1–30 (MGRSKLASRPAEEDLNPGKSKRKKISLGPE). The segment at 48 to 104 (PGLYCCNYCDKDLSGLVRFKCAVCMDFDLCVECFSVGVELNRHKNSHPYRVMDNLSF) adopts a ZZ-type zinc-finger fold. Zn(2+) contacts are provided by Cys53, Cys56, Cys68, Cys71, Cys77, Cys80, His90, and His94. One can recognise an SANT domain in the interval 106–158 (LVTSDWNADEEILLLEAIATYGFGNWKEVADHVGSKTTTECIKHFNSAYMQSP). Position 257 is an N6-acetyllysine; by GCN5 (Lys257). Residues 365-386 (QSKEEHKELIKKVIEEHQILRR) are a coiled coil. The SWIRM domain occupies 461–548 (PRIYSGLDTW…LVHKGIGDST (88 aa)).

Interacts in vitro with the HAT domain of GCN5 and with the DNA-binding domain of the transcriptional activator DREB1B/CBF1. Post-translationally, acetylated in vitro by GCN5, but acetylation is not essential for biological activity. As to expression, expressed in roots and leaves.

The protein localises to the nucleus. Functionally, required for the function of some acidic activation domains, which activate transcription from a distant site. The exact mechanism of action is not yet known. ADA2 stimulates the acetyltransferase activity of GCN5 on free histones or nucleosomes, probably by opening up the promoter region. The sequence is that of Transcriptional adapter ADA2a (ADA2A) from Arabidopsis thaliana (Mouse-ear cress).